Here is a 469-residue protein sequence, read N- to C-terminus: Lactonohydrolase oryH (469 aa).

A signal peptide spans 1–20 (MYLSLRLVSLALCIAPLASA).

The protein belongs to the SMP-30/CGR1 family.

The protein operates within secondary metabolite biosynthesis. Functionally, lactonohydrolase; part of the gene cluster that mediates the biosynthesis of oryzines, natural products with an unusual maleidride backbone. The two subunits of the fungal fatty acid synthase oryfasA and oryfasB probably form octenoic acid. This fatty acid is most likely activated by the acyl-CoA ligase oryP to give octenyl-CoA before the citrate synthase-like protein oryE catalyzes condensation with oxaloacetate to form tricarboxylic acid. The next steps of the pathways are conjectural, but a favorite possible route has been proposed, beginning with decarboxylation and concomitant dehydration by the decarboxylase oryM, followed by tautomerization, which may lead to the production of a diene intermediate. Reduction of this diene intermediate could give the known metabolite piliformic acid. On the pathway to oryzine B and oryzine A, however, hydroxylation of the diene by the alpha-ketoglutarate-dependent dioxygenase oryG and lactonisation by the lactonohydrolases oryH or oryL could give oryzine B directly. Finally, enoyl reduction by the dehydrogenase oryD would then convert oryzine B into oryzine A. The protein is Lactonohydrolase oryH of Aspergillus oryzae (strain ATCC 42149 / RIB 40) (Yellow koji mold).